Here is a 347-residue protein sequence, read N- to C-terminus: Ion-translocating oxidoreductase complex subunit D (347 aa).

Transmembrane regions (helical) follow at residues 15 to 35, 36 to 56, 84 to 104, and 114 to 134; these read IMFL…YFFG, IGTL…EIII, IPPL…IVVA, and NIFN…PVYM. T182 is modified (FMN phosphoryl threonine). 5 helical membrane-spanning segments follow: residues 217–237, 239–259, 261–281, 289–309, and 315–335; these read CINI…IICW, IPIS…FYSK, LFMS…AFFI, ACNN…VWII, and YPDA…LVDY.

The protein belongs to the NqrB/RnfD family. In terms of assembly, the complex is composed of six subunits: RnfA, RnfB, RnfC, RnfD, RnfE and RnfG. FMN is required as a cofactor.

Its subcellular location is the cell inner membrane. In terms of biological role, part of a membrane-bound complex that couples electron transfer with translocation of ions across the membrane. The sequence is that of Ion-translocating oxidoreductase complex subunit D from Buchnera aphidicola subsp. Acyrthosiphon pisum (strain 5A).